Consider the following 626-residue polypeptide: Membrane protein insertase YidC (626 aa).

The next 5 helical transmembrane spans lie at 8–28, 399–419, 469–489, 527–547, and 563–583; these read LILATGLSFVVILVWFLLFPP, MGLAIISLTLIVKAVLFPLAY, LPILLQIPIFFSLYKVIFVTL, SIMALIFIGILPLLLGISMWL, and IFAWLPWVFMFMLGSFASGLL.

This sequence belongs to the OXA1/ALB3/YidC family. Type 1 subfamily. In terms of assembly, interacts with the Sec translocase complex via SecD. Specifically interacts with transmembrane segments of nascent integral membrane proteins during membrane integration.

It localises to the cell inner membrane. In terms of biological role, required for the insertion and/or proper folding and/or complex formation of integral membrane proteins into the membrane. Involved in integration of membrane proteins that insert both dependently and independently of the Sec translocase complex, as well as at least some lipoproteins. Aids folding of multispanning membrane proteins. In Jannaschia sp. (strain CCS1), this protein is Membrane protein insertase YidC.